The following is a 153-amino-acid chain: Ribosome maturation factor RimP (153 aa).

Belongs to the RimP family.

It localises to the cytoplasm. Functionally, required for maturation of 30S ribosomal subunits. The chain is Ribosome maturation factor RimP from Synechococcus elongatus (strain ATCC 33912 / PCC 7942 / FACHB-805) (Anacystis nidulans R2).